A 139-amino-acid chain; its full sequence is Putative nickel-responsive regulator (139 aa).

The Ni(2+) site is built by His-79, His-90, His-92, and Cys-98.

Belongs to the transcriptional regulatory CopG/NikR family. Ni(2+) is required as a cofactor.

Functionally, transcriptional regulator. In Geobacter sp. (strain M21), this protein is Putative nickel-responsive regulator.